A 165-amino-acid polypeptide reads, in one-letter code: Small ribosomal subunit protein uS5 (165 aa).

One can recognise an S5 DRBM domain in the interval 13–76 (LEEKVLVVNR…EAARKNLITI (64 aa)).

It belongs to the universal ribosomal protein uS5 family. Part of the 30S ribosomal subunit. Contacts proteins S4 and S8.

Functionally, with S4 and S12 plays an important role in translational accuracy. Its function is as follows. Located at the back of the 30S subunit body where it stabilizes the conformation of the head with respect to the body. This Chlamydia felis (strain Fe/C-56) (Chlamydophila felis) protein is Small ribosomal subunit protein uS5.